The sequence spans 318 residues: Putative HTH-type transcriptional regulatory protein MJ1164 (318 aa).

Positions 131–189 (LKEVREAMGISVGKLAEVAGVSRKAIYKYETQMANPSVDVALKIEEFLDVPLVKGIDLF) constitute an HTH cro/C1-type domain. The segment at residues 142 to 161 (VGKLAEVAGVSRKAIYKYET) is a DNA-binding region (H-T-H motif).

This is Putative HTH-type transcriptional regulatory protein MJ1164 from Methanocaldococcus jannaschii (strain ATCC 43067 / DSM 2661 / JAL-1 / JCM 10045 / NBRC 100440) (Methanococcus jannaschii).